A 394-amino-acid polypeptide reads, in one-letter code: Elongation factor Tu (394 aa).

The tr-type G domain occupies 10 to 204; it reads KPHVNVGTIG…HLDSYIPEPE (195 aa). A G1 region spans residues 19–26; it reads GHVDHGKT. Position 19-26 (19-26) interacts with GTP; the sequence is GHVDHGKT. Thr-26 serves as a coordination point for Mg(2+). Residues 60-64 form a G2 region; the sequence is GITIN. Residues 81-84 are G3; sequence DCPG. GTP-binding positions include 81 to 85 and 136 to 139; these read DCPGH and NKCD. Positions 136–139 are G4; that stretch reads NKCD. Residues 174-176 form a G5 region; it reads SAL.

The protein belongs to the TRAFAC class translation factor GTPase superfamily. Classic translation factor GTPase family. EF-Tu/EF-1A subfamily. As to quaternary structure, monomer.

It localises to the cytoplasm. The catalysed reaction is GTP + H2O = GDP + phosphate + H(+). GTP hydrolase that promotes the GTP-dependent binding of aminoacyl-tRNA to the A-site of ribosomes during protein biosynthesis. In Haemophilus ducreyi (strain 35000HP / ATCC 700724), this protein is Elongation factor Tu.